Here is a 271-residue protein sequence, read N- to C-terminus: Extracellular metalloprotease ARB_05317 (271 aa).

The signal sequence occupies residues 1–19; the sequence is MRFSVLLTGLAAAGSIATA. N-linked (GlcNAc...) asparagine glycosylation is present at N136. Residue H185 participates in Zn(2+) binding. The active site involves E186. H189 is a Zn(2+) binding site. N200 carries N-linked (GlcNAc...) asparagine glycosylation. C222 and C248 are disulfide-bonded.

This sequence belongs to the peptidase M43B family.

Its subcellular location is the secreted. In terms of biological role, secreted metalloproteinase that allows assimilation of proteinaceous substrates. Plays a pivotal role as a pathogenicity determinant during infections and contributes to the ability of the pathogen to persist within the mammalian host. This is Extracellular metalloprotease ARB_05317 from Arthroderma benhamiae (strain ATCC MYA-4681 / CBS 112371) (Trichophyton mentagrophytes).